The chain runs to 1108 residues: Retinal guanylyl cyclase 2 (1108 aa).

The first 50 residues, 1-50 (MFLGPWPFSRLLSWFAISSRLSGQHGLTSSKFLRYLCLLALLPLIWWGQA), serve as a signal peptide directing secretion. Over 51-465 (LPYKIGVIGP…QGKICQGGID (415 aa)) the chain is Extracellular. An intrachain disulfide couples Cys-104 to Cys-132. The chain crosses the membrane as a helical span at residues 466–490 (PALAMMVCFALLLALLSINGFAYFI). At 491-1108 (RRRINKIQLI…AERQLVRNKP (618 aa)) the chain is on the cytoplasmic side. The region spanning 532–812 (FQIISEVQSG…DEIFNQFKTF (281 aa)) is the Protein kinase domain. Positions 884–1014 (TLYFSDIVGF…DTVNTASRME (131 aa)) constitute a Guanylate cyclase domain.

It belongs to the adenylyl cyclase class-4/guanylyl cyclase family. Homodimer. Interacts with RD3; promotes the exit of GUCY2F from the endoplasmic reticulum and its trafficking to the photoreceptor outer segments. There are 9 conserved cysteine residues in sensory guanylate cyclases, 6 in the extracellular domain, which may be involved in intra- or interchain disulfide bonds. In terms of tissue distribution, expressed only in the eye.

The protein localises to the membrane. The protein resides in the photoreceptor outer segment membrane. It catalyses the reaction GTP = 3',5'-cyclic GMP + diphosphate. Activated by GUCA1B when free calcium ions concentration is low, and inhibited by GUCA1B when free calcium ions concentration is high. Inhibited by RD3. Its function is as follows. Responsible for the synthesis of cyclic GMP (cGMP) in rods and cones of photoreceptors. Plays an essential role in phototransduction, by mediating cGMP replenishment. May also participate in the trafficking of membrane-asociated proteins to the photoreceptor outer segment membrane. This is Retinal guanylyl cyclase 2 (Gucy2f) from Rattus norvegicus (Rat).